We begin with the raw amino-acid sequence, 195 residues long: Coiled-coil domain-containing protein 184 (195 aa).

The stretch at 39-68 forms a coiled coil; the sequence is GMKELMEHLKAQLQALFEDVRAMRGALDEQ. Residues 98 to 175 form a disordered region; that stretch reads RQGGLGVVGN…AGLLGGDGPL (78 aa). A compositionally biased stretch (acidic residues) spans 135 to 146; the sequence is PEDEEDDDEEEK.

The sequence is that of Coiled-coil domain-containing protein 184 (CCDC184) from Bos taurus (Bovine).